The sequence spans 1499 residues: DNA-directed RNA polymerase subunit beta' (1499 aa).

Positions 67, 69, 82, and 85 each coordinate Zn(2+). The Mg(2+) site is built by Asp-497, Asp-499, and Asp-501. Residues Cys-865, Cys-940, Cys-947, and Cys-950 each coordinate Zn(2+). Residues 1475–1499 form a disordered region; that stretch reads YEPSQRAYQEDEYAKKEDGEIAIDD. The segment covering 1482 to 1493 has biased composition (basic and acidic residues); that stretch reads YQEDEYAKKEDG.

It belongs to the RNA polymerase beta' chain family. In terms of assembly, the RNAP catalytic core consists of 2 alpha, 1 beta, 1 beta' and 1 omega subunit. When a sigma factor is associated with the core the holoenzyme is formed, which can initiate transcription. Mg(2+) serves as cofactor. Zn(2+) is required as a cofactor.

It catalyses the reaction RNA(n) + a ribonucleoside 5'-triphosphate = RNA(n+1) + diphosphate. Functionally, DNA-dependent RNA polymerase catalyzes the transcription of DNA into RNA using the four ribonucleoside triphosphates as substrates. This chain is DNA-directed RNA polymerase subunit beta', found in Chloroherpeton thalassium (strain ATCC 35110 / GB-78).